The sequence spans 308 residues: Olfactory receptor 2T6 (308 aa).

The Extracellular portion of the chain corresponds to 1-28; it reads MNENNETLTRGFTLMGLFTHNKCSGFFF. An N-linked (GlcNAc...) asparagine glycan is attached at Asn5. A helical membrane pass occupies residues 29–49; that stretch reads GVICAVFFMAMIANGVMIFLI. Residues 50–57 are Cytoplasmic-facing; the sequence is NIDPHLHT. The chain crosses the membrane as a helical span at residues 58 to 78; that stretch reads PMYFLLSHLSVIDTLYISTIV. At 79-98 the chain is on the extracellular side; the sequence is PKMLVDYLMGEGTISFIACT. A disulfide bridge connects residues Cys97 and Cys179. The helical transmembrane segment at 99 to 119 threads the bilayer; that stretch reads AQCFLYMGFMGAEFFLLGLMA. Residues 120 to 145 lie on the Cytoplasmic side of the membrane; the sequence is YDRYVAICNPLRYPVLISWRVCWMIL. Residues 146-166 traverse the membrane as a helical segment; that stretch reads ASSWFGGALDSFLLTPITMSL. Topologically, residues 167–203 are extracellular; sequence PFCASHQINHFFCEAPTMLRLACGDKTTYETVMYVCC. Residues 204 to 224 form a helical membrane-spanning segment; that stretch reads VAMLLIPFSVVTASYTRILIT. Residues 225–236 lie on the Cytoplasmic side of the membrane; that stretch reads VHQMTSAEGRKK. A helical transmembrane segment spans residues 237–257; that stretch reads AFATCSSHMMVVTLFYGAALY. Over 258–271 the chain is Extracellular; sequence TYTLPQSYHTPIKD. A helical membrane pass occupies residues 272–292; the sequence is KVFSAFYTILTPLLNPLIYSL. At 293–308 the chain is on the cytoplasmic side; the sequence is RNRDVMGALKRVVARC.

The protein belongs to the G-protein coupled receptor 1 family.

It is found in the cell membrane. Its function is as follows. Odorant receptor. In Homo sapiens (Human), this protein is Olfactory receptor 2T6 (OR2T6).